The following is a 122-amino-acid chain: Large ribosomal subunit protein uL18 (122 aa).

Residues 1–19 (MSTLSRKQKTQKRHKRLRR) are compositionally biased toward basic residues. Residues 1–26 (MSTLSRKQKTQKRHKRLRRNLSGTDQ) form a disordered region.

The protein belongs to the universal ribosomal protein uL18 family. In terms of assembly, part of the 50S ribosomal subunit; part of the 5S rRNA/L5/L18/L25 subcomplex. Contacts the 5S and 23S rRNAs.

Functionally, this is one of the proteins that bind and probably mediate the attachment of the 5S RNA into the large ribosomal subunit, where it forms part of the central protuberance. The sequence is that of Large ribosomal subunit protein uL18 from Prochlorococcus marinus (strain SARG / CCMP1375 / SS120).